A 267-amino-acid chain; its full sequence is L-aspartate dehydrogenase (267 aa).

The NAD(+) site is built by Ala-124 and Asn-190. His-218 is an active-site residue.

It belongs to the L-aspartate dehydrogenase family.

It catalyses the reaction L-aspartate + NADP(+) + H2O = oxaloacetate + NH4(+) + NADPH + H(+). The catalysed reaction is L-aspartate + NAD(+) + H2O = oxaloacetate + NH4(+) + NADH + H(+). The protein operates within cofactor biosynthesis; NAD(+) biosynthesis; iminoaspartate from L-aspartate (dehydrogenase route): step 1/1. Specifically catalyzes the NAD or NADP-dependent dehydrogenation of L-aspartate to iminoaspartate. The protein is L-aspartate dehydrogenase of Methanococcus maripaludis (strain C7 / ATCC BAA-1331).